The following is a 506-amino-acid chain: Aspartic proteinase A1 (506 aa).

Residues 1-24 form the signal peptide; the sequence is MKIYSRTVAVSLIVSFLLCFSAFA. The propeptide at 25-64 is activation peptide; sequence ERNDGTFRVGLKKLKLDSKNRLAARVESKQEKPLRAYRLG. The region spanning 82–503 is the Peptidase A1 domain; the sequence is YYGEIAIGTP…DFGNEQVGFA (422 aa). The active site involves aspartate 100. 2 disulfide bridges follow: cysteine 113/cysteine 119 and cysteine 278/cysteine 282. Aspartate 287 is a catalytic residue. Positions 312 to 417 constitute a Saposin B-type domain; that stretch reads VVSQQCKTVV…NELCERLPSP (106 aa). Disulfide bonds link cysteine 317–cysteine 411, cysteine 342–cysteine 383, cysteine 348–cysteine 380, and cysteine 425–cysteine 462. Asparagine 397 carries N-linked (GlcNAc...) asparagine glycosylation.

Belongs to the peptidase A1 family. In terms of tissue distribution, expressed in roots, leaves, stems, petals, carpels, seed pods and dry seeds.

The protein resides in the vacuole. In terms of biological role, involved in the breakdown of propeptides of storage proteins in protein-storage vacuoles. Possesses aspartic protease activity in vitro. This is Aspartic proteinase A1 (APA1) from Arabidopsis thaliana (Mouse-ear cress).